Here is a 445-residue protein sequence, read N- to C-terminus: Tubulin beta-1 chain (445 aa).

The MREI motif signature appears at 1–4; the sequence is MREI. GTP is bound by residues Q11, E69, S138, G142, T143, G144, N204, and N226. A Mg(2+)-binding site is contributed by E69. The disordered stretch occupies residues 424 to 445; the sequence is QYQDATADEQGEFEEEGEEDEA. Residues 429–445 are compositionally biased toward acidic residues; sequence TADEQGEFEEEGEEDEA. E438 is subject to 5-glutamyl polyglutamate.

Belongs to the tubulin family. As to quaternary structure, dimer of alpha and beta chains. A typical microtubule is a hollow water-filled tube with an outer diameter of 25 nm and an inner diameter of 15 nM. Alpha-beta heterodimers associate head-to-tail to form protofilaments running lengthwise along the microtubule wall with the beta-tubulin subunit facing the microtubule plus end conferring a structural polarity. Microtubules usually have 13 protofilaments but different protofilament numbers can be found in some organisms and specialized cells. Mg(2+) serves as cofactor. In terms of processing, some glutamate residues at the C-terminus are polyglycylated, resulting in polyglycine chains on the gamma-carboxyl group. Glycylation is mainly limited to tubulin incorporated into axonemes (cilia and flagella) whereas glutamylation is prevalent in neuronal cells, centrioles, axonemes, and the mitotic spindle. Both modifications can coexist on the same protein on adjacent residues, and lowering polyglycylation levels increases polyglutamylation, and reciprocally. The precise function of polyglycylation is still unclear. Some glutamate residues at the C-terminus are polyglutamylated, resulting in polyglutamate chains on the gamma-carboxyl group. Polyglutamylation plays a key role in microtubule severing by spastin (SPAST). SPAST preferentially recognizes and acts on microtubules decorated with short polyglutamate tails: severing activity by SPAST increases as the number of glutamates per tubulin rises from one to eight, but decreases beyond this glutamylation threshold. In terms of tissue distribution, highly expressed in skeletal muscle.

The protein resides in the cytoplasm. It is found in the cytoskeleton. Functionally, tubulin is the major constituent of microtubules, a cylinder consisting of laterally associated linear protofilaments composed of alpha- and beta-tubulin heterodimers. Microtubules grow by the addition of GTP-tubulin dimers to the microtubule end, where a stabilizing cap forms. Below the cap, tubulin dimers are in GDP-bound state, owing to GTPase activity of alpha-tubulin. This is Tubulin beta-1 chain from Gallus gallus (Chicken).